A 417-amino-acid chain; its full sequence is PRKCA-binding protein (417 aa).

In terms of domain architecture, PDZ spans 22–105; that stretch reads KVTLQKDAQN…EVTIHYNKLQ (84 aa). Positions 44 and 46 each coordinate Zn(2+). Thr-82 carries the phosphothreonine modification. The 214-residue stretch at 144-357 folds into the AH domain; sequence LCNDGLVKRL…CYSVLRDADV (214 aa). The segment at 375–417 is disordered; that stretch reads QDEFTDGEDEEDEDEEDTAAGEPPRDSRGAAGPLDKGGSWCNS. The segment covering 377-393 has biased composition (acidic residues); the sequence is EFTDGEDEEDEDEEDTA. A lipid anchor (S-palmitoyl cysteine; by DHHC8) is attached at Cys-415.

As to quaternary structure, monomer and homodimer. Interacts with CXADR. Interacts presynaptically with the glutamate receptors GRIA2, GRIA3, GRIK3, isoform 3 of GRIA4, isoform A of GRM4, GRM7 and GRM8; with NAPA and NAPB; and with BTG2. The interaction with NAPA and NAPB disrupts the interaction with GRIA2, conducting to the internalization of GRIA2. Interacts with PRKCA; with the amine transporters SLC6A2 and SLC6A3; with the channels ASIC1 and ASIC2; with the GTP-binding proteins ARF1 and ARF3; with the ephrin receptor tyrosine kinases EPHA7, EPHB1 and EPHB2; with ERBB2 and through its PDZ domain with the C-terminal tail of PRLHR. Interacts with UNC5A. Interacts (via AH domain) with NCS1/FREQ; in a calcium-dependent manner. Interacts with F-actin and associates with the ARP2/3 complex. Interacts (via PDZ domain) with ARF1 (activated); the interaction blocks Arp2/3 complex inhibition. Interacts with SORCS3. In terms of processing, phosphorylation at Thr-82 appears to inhibit the interaction with AMPA receptors. Palmitoylation on Cys-415 is essential for long-term synaptic depression (LTD).

Its subcellular location is the cytoplasm. It is found in the perinuclear region. The protein localises to the membrane. It localises to the postsynaptic density. The protein resides in the synapse. Its subcellular location is the synaptosome. It is found in the cytoskeleton. In terms of biological role, probable adapter protein that bind to and organize the subcellular localization of a variety of membrane proteins containing some PDZ recognition sequence. Involved in the clustering of various receptors, possibly by acting at the receptor internalization level. Plays a role in synaptic plasticity by regulating the trafficking and internalization of AMPA receptors. May be regulated upon PRKCA activation. May regulate ASIC1/ASIC3 channel. Regulates actin polymerization by inhibiting the actin-nucleating activity of the Arp2/3 complex; the function is competitive with nucleation promoting factors and is linked to neuronal morphology regulation and AMPA receptor (AMPAR) endocytosis. Via interaction with the Arp2/3 complex involved in regulation of synaptic plasicity of excitatory synapses and required for spine shrinkage during long-term depression (LTD). Involved in regulation of astrocyte morphology, antagonistic to Arp2/3 complex activator WASL/N-WASP function. In Bos taurus (Bovine), this protein is PRKCA-binding protein (PICK1).